A 43-amino-acid chain; its full sequence is Protein PsbN (43 aa).

Residues 5-25 (TLISVFVASLVIGITAYAIFV) traverse the membrane as a helical segment.

It belongs to the PsbN family.

The protein resides in the plastid. It is found in the chloroplast thylakoid membrane. Its function is as follows. May play a role in photosystem I and II biogenesis. The sequence is that of Protein PsbN from Cyanidioschyzon merolae (strain NIES-3377 / 10D) (Unicellular red alga).